The primary structure comprises 371 residues: Ferrochelatase (371 aa).

Fe cation is bound by residues histidine 218 and glutamate 299.

It belongs to the ferrochelatase family.

The protein resides in the cytoplasm. It catalyses the reaction heme b + 2 H(+) = protoporphyrin IX + Fe(2+). It participates in porphyrin-containing compound metabolism; protoheme biosynthesis; protoheme from protoporphyrin-IX: step 1/1. Functionally, catalyzes the ferrous insertion into protoporphyrin IX. The chain is Ferrochelatase from Ralstonia pickettii (strain 12J).